The primary structure comprises 304 residues: Probable WRKY transcription factor 13 (304 aa).

Residues 141 to 190 are disordered; sequence QKNNHGSEIDVDDNDDEVGDGGGINDDDNGRHHHHDTPSRHDKHNTASLG. Residues 149-159 show a composition bias toward acidic residues; the sequence is IDVDDNDDEVG. Positions 217-282 form a DNA-binding region, WRKY; it reads SEVDVLDDGY…YEGRHLHSPS (66 aa).

The protein belongs to the WRKY group II-c family.

It localises to the nucleus. Transcription factor. Interacts specifically with the W box (5'-(T)TGAC[CT]-3'), a frequently occurring elicitor-responsive cis-acting element. The polypeptide is Probable WRKY transcription factor 13 (WRKY13) (Arabidopsis thaliana (Mouse-ear cress)).